Here is a 335-residue protein sequence, read N- to C-terminus: Nucleoid-associated protein YejK (335 aa).

This sequence belongs to the YejK family.

Its subcellular location is the cytoplasm. It is found in the nucleoid. The chain is Nucleoid-associated protein YejK from Salmonella arizonae (strain ATCC BAA-731 / CDC346-86 / RSK2980).